The sequence spans 721 residues: MSDYSTGGPPPGPPPPAGGGGGAAGAGGGPPPGPPGAGDRGGGGPGGGGPGGGGASGGPSQPPGGGGPGIRKDAFADAVQRARQIAAKIGGDAATTVNNNTPDFGFGGQKRQLEDGDQPDSKKLASQGDSIGSQLGPIHPPPRTSMTEEYRVPDGMVGLIIGRGGEQINKIQQDSGCKVQISPDSGGLPERSVSLTGAPESVQKAKMMLDDIVSRGRGGPPGQFHDNANGGQNGTVQEIMIPAGKAGLVIGKGGETIKQLQERAGVKMILIQDGSQNTNVDKPLRIIGDPYKVQQACEMVMDILRERDQGGFGDRNEYGSRVGGGIDVPVPRHSVGVVIGRSGEMIKKIQNDAGVRIQFKQDDGTGPEKIAHIMGPPDRCEHAARIINDLLQSLRSGPPGPPGAPGMPPGGRGRGRGQGNWGPPGGEMTFSIPTHKCGLVIGRGGENVKAINQQTGAFVEISRQLPPNGDPNFKLFVIRGSPQQIDHAKQLIEEKIEGPLCPVGPGPGGPGPAGPMGPFHPGPFNQGPPGAPPHAGGPPPHQYPPQGWGNTYPEWQPPAPHDPNKAAAAATDPNAAWAAYYSHYYQQPPGPVPGPAPAPAAPPAQGEPPQPPPTGQSDYTKAWEEYYKKIGQQPQQPGAPPQQDYTKAWEEYYKKQAQVATGGGPGAPPGSQPDYSAAWAEYYRQQAAYYGQTPGPGGPQPPSTQQGQQQATEANGYELHL.

The segment at 1 to 148 (MSDYSTGGPP…HPPPRTSMTE (148 aa)) is disordered. At Ser-2 the chain carries N-acetylserine. Residues 8 to 17 (GPPPGPPPPA) are compositionally biased toward pro residues. 2 stretches are compositionally biased toward gly residues: residues 18–28 (GGGGGAAGAGG) and 36–69 (GAGD…GGPG). An Omega-N-methylarginine modification is found at Arg-40. Lys-88 carries the N6-acetyllysine modification. At Thr-101 the chain carries Phosphothreonine. Residues 111-123 (RQLEDGDQPDSKK) show a composition bias toward basic and acidic residues. Lys-122 participates in a covalent cross-link: Glycyl lysine isopeptide (Lys-Gly) (interchain with G-Cter in SUMO1); alternate. Lys-122 is covalently cross-linked (Glycyl lysine isopeptide (Lys-Gly) (interchain with G-Cter in SUMO2); alternate). Phosphoserine is present on residues Ser-126, Ser-130, Ser-182, Ser-185, Ser-194, and Ser-275. KH domains are found at residues 145 to 209 (SMTE…KMML), 234 to 300 (GTVQ…CEMV), and 323 to 387 (GGGI…ARII). Positions 394–422 (LRSGPPGPPGAPGMPPGGRGRGRGQGNWG) are disordered. Pro residues predominate over residues 398 to 408 (PPGPPGAPGMP). Residues 409-422 (PGGRGRGRGQGNWG) show a composition bias toward gly residues. Omega-N-methylarginine is present on residues Arg-412, Arg-414, Arg-416, and Arg-443. In terms of domain architecture, KH 4 spans 425 to 492 (GGEMTFSIPT…QQIDHAKQLI (68 aa)). Position 481 is a phosphoserine (Ser-481). Residues 498–570 (GPLCPVGPGP…HDPNKAAAAA (73 aa)) are disordered. 2 stretches are compositionally biased toward pro residues: residues 502 to 521 (PVGP…PFHP) and 529 to 543 (PGAP…PHQY). Repeat unit 1 spans residues 572–583 (DPNAAWAAYYSH). A 4 X 12 AA imperfect repeats region spans residues 572–685 (DPNAAWAAYY…SAAWAEYYRQ (114 aa)). Positions 588–614 (PPGPVPGPAPAPAAPPAQGEPPQPPPT) are enriched in pro residues. Disordered stretches follow at residues 588–650 (PPGP…KAWE), 659–678 (VATG…YSAA), and 688–721 (AYYG…ELHL). Repeat copies occupy residues 618–629 (DYTKAWEEYYKK), 644–655 (DYTKAWEEYYKK), and 674–685 (DYSAAWAEYYRQ).

The protein belongs to the KHSRP family. As to quaternary structure, part of a ternary complex containing FUBP2, PTBP1, PTBP2 and HNRPH1. Interacts with PARN. Interacts with PQBP1.

Its subcellular location is the nucleus. The protein localises to the cytoplasm. Part of a ternary complex that binds to the downstream control sequence (DCS) of the pre-mRNA. Mediates exon inclusion in transcripts that are subject to tissue-specific alternative splicing. May interact with single-stranded DNA from the far-upstream element (FUSE). May activate gene expression. Also involved in degradation of inherently unstable mRNAs that contain AU-rich elements (AREs) in their 3'-UTR, possibly by recruiting degradation machinery to ARE-containing mRNAs. Binds to the dendritic targeting element and may play a role in mRNA trafficking. The chain is Far upstream element-binding protein 2 (Khsrp) from Rattus norvegicus (Rat).